We begin with the raw amino-acid sequence, 201 residues long: MTMTRLKISKTLLAVMLTSAVATGSAYAENNAQTTNESAGQKVDSSMNKVGNFMDDSAITAKVKAALVDHDNIKSTDISVKTDQKVVTLSGFVESQAQAEEAVKVAKGVEGVTSVSDKLHVRDAKEGSVKGYAGDTATTSEIKAKLLADDIVPSRHVKVETTDGVVQLSGTVDSQAQSDRAESIAKAVDGVKSVKNDLKTK.

The signal sequence occupies residues 1–28; that stretch reads MTMTRLKISKTLLAVMLTSAVATGSAYA. BON domains lie at 55–123 and 134–201; these read DDSA…HVRD and GDTA…LKTK.

The protein localises to the periplasm. This chain is Osmotically-inducible protein Y (osmY), found in Escherichia coli (strain K12).